We begin with the raw amino-acid sequence, 246 residues long: Large ribosomal subunit protein uL30 (246 aa).

An N-acetylmethionine modification is found at M1. 4 tandem repeats follow at residues 7–17 (KKVPSVPESLL), 18–28 (KRRQAYAAAKA), 29–40 (KRLKRLLAQKKF), and 41–52 (RKAQRKIIYERA). A 4 X 12 AA tandem repeats region spans residues 7 to 52 (KKVPSVPESLLKRRQAYAAAKAKRLKRLLAQKKFRKAQRKIIYERA).

It belongs to the universal ribosomal protein uL30 family. As to quaternary structure, component of the large ribosomal subunit.

The protein resides in the cytoplasm. Component of the large ribosomal subunit. The ribosome is a large ribonucleoprotein complex responsible for the synthesis of proteins in the cell. Binds to G-rich structures in 28S rRNA and in mRNAs. Plays a regulatory role in the translation apparatus; inhibits cell-free translation of mRNAs. This is Large ribosomal subunit protein uL30 (RPL7) from Gallus gallus (Chicken).